A 904-amino-acid polypeptide reads, in one-letter code: Protein abrupt (904 aa).

Over residues 1-15 (MTESTQLQTAENNNA) the composition is skewed to polar residues. Disordered stretches follow at residues 1 to 30 (MTES…TSSV) and 53 to 72 (GSAL…HQQQ). The BTB domain maps to 103–168 (VDVTLACDER…MYNGEVNVSH (66 aa)). Low complexity predominate over residues 204 to 238 (SHNSSNNNNNNSSSNNSLSNNNNNNNNNAESSNHN). Disordered stretches follow at residues 204–287 (SHNS…LNSP), 349–390 (ASSA…PPPQ), 411–438 (LLDR…KDRE), and 451–501 (ALEN…NQRS). Positions 239 to 253 (KISSYLSPNQTSAAC) are enriched in polar residues. Residues 254–286 (NNSSNSNSNNHSSSHNNSSSNNISGSLNSSLNS) show a composition bias toward low complexity. The span at 429-438 (SGRDTSKDRE) shows a compositional bias: basic and acidic residues. The segment covering 452 to 461 (LENSNGQQAN) has biased composition (polar residues). At Ser474 the chain carries Phosphoserine. Basic and acidic residues predominate over residues 481–500 (PSDRGDGQHDGTLDGIDNQR). C2H2-type zinc fingers lie at residues 544 to 567 (RPCP…EDKH) and 573 to 596 (YRCV…SRQH). Disordered regions lie at residues 633–696 (ELRA…GGSS) and 832–904 (AAGN…VHNT). Gly residues predominate over residues 642 to 655 (GGSGSSGGGGGGGS). Residues 671–682 (DDAEDSDDDPED) show a composition bias toward acidic residues. Residues Ser837, Ser846, and Ser868 each carry the phosphoserine modification. Over residues 851–868 (MGHDEMAENDGDMRREGS) the composition is skewed to basic and acidic residues. Residues 876–886 (DNNQSGSNHEV) are compositionally biased toward polar residues. A phosphoserine mark is found at Ser889 and Ser896.

As to expression, expressed in CNS midline cells during embryonic stages 9-13. Expression also seen in cells of the stomagastric nervous system. Segmentally repeated stripes of ectodermal expression appear at stage 11 that become uniform by stage 12 and throughout embryogenesis. Expressed at variable levels in somatic muscles from stage 16 and in all imaginal disks during larval development. Expression is seen in da neurons that grow in two-dimensional dendrites underneath the epidermis during late embryonic, larval, and pupal stages.

Its subcellular location is the nucleus. Expression is vital for development; may be involved in transcriptional regulation. In embryos, muscle specific expression is required for segmental nerve b (SNb) motoneuron target recognition within ventral longitudinal muscles. Has a role in establishing and maintaining embryonic muscle attachments, adult sensory cell formation (macrochaetae) and morphogenesis of adult appendages (legs, antenna aristae and male external genitalia). Has a role in the morphogenesis of the class I dendritic neurons: selective expression of ab in class I da neurons plays a pivotal role in forming dendritic arbors, which are characteristic of the class I cells. The development of more complex arbors of class II-IV neurons depends on the absence of ab. This chain is Protein abrupt (ab), found in Drosophila melanogaster (Fruit fly).